Consider the following 423-residue polypeptide: Probable sodium/metabolite cotransporter BASS4, chloroplastic (423 aa).

A chloroplast-targeting transit peptide spans Met1–Arg55. The interval Ala23–Pro45 is disordered. A run of 9 helical transmembrane segments spans residues Phe96–Cys116, Leu123–Arg140, Ala153–Met173, Phe182–Leu202, Leu212–Leu232, Leu244–Gly264, Gly284–Val301, Ala315–Ala335, and Leu389–Val409.

This sequence belongs to the bile acid:sodium symporter (BASS) (TC 2.A.28) family.

The protein resides in the membrane. It localises to the plastid. Its subcellular location is the chloroplast envelope. In terms of biological role, may function as sodium-coupled metabolite transporter across the chloroplast envelope. In Oryza sativa subsp. indica (Rice), this protein is Probable sodium/metabolite cotransporter BASS4, chloroplastic (BASS4).